The chain runs to 365 residues: Probable L-tyrosine/L-aspartate decarboxylase (365 aa).

Lys-224 is modified (N6-(pyridoxal phosphate)lysine).

Belongs to the group II decarboxylase family. MfnA subfamily. Requires pyridoxal 5'-phosphate as cofactor.

It catalyses the reaction L-tyrosine + H(+) = tyramine + CO2. The catalysed reaction is L-aspartate + H(+) = beta-alanine + CO2. It participates in cofactor biosynthesis; methanofuran biosynthesis. The protein operates within cofactor biosynthesis; coenzyme A biosynthesis. Its function is as follows. Catalyzes the decarboxylation of L-tyrosine to produce tyramine for methanofuran biosynthesis. Can also catalyze the decarboxylation of L-aspartate to produce beta-alanine for coenzyme A (CoA) biosynthesis. The polypeptide is Probable L-tyrosine/L-aspartate decarboxylase (Methanoculleus marisnigri (strain ATCC 35101 / DSM 1498 / JR1)).